A 277-amino-acid chain; its full sequence is Inositol monophosphatase 1 (277 aa).

The Mg(2+) site is built by E70, D90, I92, and D93. Substrate is bound at residue E70. A substrate-binding site is contributed by I92 to T95. The residue at position 168 (T168) is a Phosphothreonine. Residues G194 to A196, E213, and D220 contribute to the substrate site. A Mg(2+)-binding site is contributed by D220.

This sequence belongs to the inositol monophosphatase superfamily. Homodimer. Mg(2+) is required as a cofactor.

The protein localises to the cytoplasm. The enzyme catalyses a myo-inositol phosphate + H2O = myo-inositol + phosphate. It carries out the reaction 1D-myo-inositol 1-phosphate + H2O = myo-inositol + phosphate. The catalysed reaction is 1D-myo-inositol 2-phosphate + H2O = myo-inositol + phosphate. It catalyses the reaction 1D-myo-inositol 3-phosphate + H2O = myo-inositol + phosphate. The enzyme catalyses 1D-myo-inositol 4-phosphate + H2O = myo-inositol + phosphate. It carries out the reaction 1D-myo-inositol 5-phosphate + H2O = myo-inositol + phosphate. The catalysed reaction is 1D-myo-inositol 6-phosphate + H2O = myo-inositol + phosphate. It catalyses the reaction scyllo-inositol 1-phosphate + H2O = scyllo-inositol + phosphate. The enzyme catalyses alpha-D-galactose 1-phosphate + H2O = D-galactose + phosphate. It carries out the reaction alpha-D-glucose 1-phosphate + H2O = D-glucose + phosphate. The catalysed reaction is D-glucose 6-phosphate + H2O = D-glucose + phosphate. It catalyses the reaction beta-D-fructose 1-phosphate + H2O = D-fructose + phosphate. The enzyme catalyses glycerol 2-phosphate + H2O = glycerol + phosphate. It carries out the reaction adenosine 2'-phosphate + H2O = adenosine + phosphate. Its pathway is polyol metabolism; myo-inositol biosynthesis; myo-inositol from D-glucose 6-phosphate: step 2/2. Its activity is regulated as follows. Activity with myo-inositol monophosphates and D-galactose 1-phosphate is inhibited by Li(+), Ca(2+) and Mn(2+), but also by Mg(2+) at concentrations above 3 mM. Its function is as follows. Phosphatase involved in the dephosphorylation of myo-inositol monophosphates to generate myo-inositol. Is also able to dephosphorylate scyllo-inositol-phosphate, myo-inositol 1,4-diphosphate, scyllo-inositol-1,3-diphosphate and scyllo-inositol-1,4-diphosphate. Also dephosphorylates in vitro other sugar-phosphates including D-galactose-1-phosphate, glucose-1-phosphate, glucose-6-phosphate, fructose-1-phosphate, beta-glycerophosphate and 2'-AMP. Responsible for the provision of inositol required for synthesis of phosphatidylinositols and polyphosphoinositides, and involved in maintaining normal brain function. Has been implicated as the pharmacological target for lithium (Li(+)) action in brain, which is used to treat bipolar affective disorder. Is equally active with 1D-myo-inositol 1-phosphate, 1D-myo-inositol 3-phosphate and D-galactose 1-phosphate. The chain is Inositol monophosphatase 1 from Homo sapiens (Human).